We begin with the raw amino-acid sequence, 92 residues long: Defensin Lucifensin (92 aa).

Positions 1–23 are cleaved as a signal peptide; the sequence is MKFFMVFAVTFCLALSFVSQSLA. Positions 24–52 are excised as a propeptide; sequence LPADDEAHFVDGLEALKTIEPELHGRYKR. Disulfide bonds link cysteine 55-cysteine 82, cysteine 68-cysteine 88, and cysteine 72-cysteine 90.

The protein belongs to the invertebrate defensin family. Type 1 subfamily. Post-translationally, the disulfide bonds are essential for antimicrobial activity. As to expression, larval fat body, hemolymph and salivary glands (at protein level). Expressed in the salivary glands of all larval stages.

The protein localises to the secreted. The protein resides in the host cell membrane. In terms of biological role, shows strong antibacterial activity against numerous Gram-positive bacteria. It selectively inhibits peptidoglycan biosynthesis through complex formation with the cell wall precursor lipid II (1:1 molar ratio) thus inhibiting cell wall synthesis. Shows antibacterial activity against the Gram-positive bacteria M.luteus, E.fecalis (MIC=32 mg/L), S.aureus (MIC=16 mg/L), S.carnosus (MIC=2 mg/L), S.pneumoniae (MIC=2 mg/L) and S.pyogenes (MIC=2 mg/L) and against a number of methicillin-resistant S.aureus and glycopeptide-intermediate S.aureus isolates. Does not show antibacterial activity against Gram-negative bacteria or antifungal activity against C.utilis. Shows slight antifungal activity against C.albicans. The sequence is that of Defensin Lucifensin from Lucilia sericata (Green bottle fly).